Consider the following 302-residue polypeptide: MQDVVTPAGGVWVHWRDYLTLTKPRVVVLMVFTAIVGMFLASPGQVPWVALTVGSLGIALAAGSAAALNHLADQRIDAIMARTRRRPLPSGHLRPLQVLGFSSLLGVAGLGMLALWINPLTAALTFASLIGYALVYTLYLKRATPQNIVIGGAAGAAPPLLGWTAVTGSVDAHALLLFLIVFVWTPPHFWALAVARLKDYERADVPMLPVVYGERFTRWQILLYTVLLLAVSLLPWATFMGGWLYLAAAVGLGGWYLMLNVRLLLTPGPRLPMRSFRFSIIYLFGLFAALLVDRQLPVWLGA.

The next 9 helical transmembrane spans lie at 26–46 (VVVL…PGQV), 48–68 (WVAL…AAAL), 98–118 (VLGF…LWIN), 120–140 (LTAA…TLYL), 148–168 (IVIG…AVTG), 174–194 (ALLL…ALAV), 221–241 (ILLY…TFMG), 244–264 (LYLA…VRLL), and 280–300 (IIYL…PVWL).

This sequence belongs to the UbiA prenyltransferase family. Protoheme IX farnesyltransferase subfamily.

It localises to the cell inner membrane. It catalyses the reaction heme b + (2E,6E)-farnesyl diphosphate + H2O = Fe(II)-heme o + diphosphate. The protein operates within porphyrin-containing compound metabolism; heme O biosynthesis; heme O from protoheme: step 1/1. Functionally, converts heme B (protoheme IX) to heme O by substitution of the vinyl group on carbon 2 of heme B porphyrin ring with a hydroxyethyl farnesyl side group. This Alkalilimnicola ehrlichii (strain ATCC BAA-1101 / DSM 17681 / MLHE-1) protein is Protoheme IX farnesyltransferase.